Here is a 204-residue protein sequence, read N- to C-terminus: Peptidyl-tRNA hydrolase (204 aa).

Residue Tyr19 coordinates tRNA. His24 acts as the Proton acceptor in catalysis. The tRNA site is built by Tyr70, Asn72, and Asn118.

Belongs to the PTH family. As to quaternary structure, monomer.

The protein localises to the cytoplasm. The enzyme catalyses an N-acyl-L-alpha-aminoacyl-tRNA + H2O = an N-acyl-L-amino acid + a tRNA + H(+). Functionally, hydrolyzes ribosome-free peptidyl-tRNAs (with 1 or more amino acids incorporated), which drop off the ribosome during protein synthesis, or as a result of ribosome stalling. In terms of biological role, catalyzes the release of premature peptidyl moieties from peptidyl-tRNA molecules trapped in stalled 50S ribosomal subunits, and thus maintains levels of free tRNAs and 50S ribosomes. The protein is Peptidyl-tRNA hydrolase of Prochlorococcus marinus (strain SARG / CCMP1375 / SS120).